Here is an 844-residue protein sequence, read N- to C-terminus: Rho guanine nucleotide exchange factor 33 (844 aa).

Basic and acidic residues-rich tracts occupy residues 1 to 13 and 101 to 113; these read MEKT…ENEH and QQKI…EKRR. Disordered regions lie at residues 1–20, 101–142, and 169–189; these read MEKT…NNPS, QQKI…GSPF, and AQES…MGPG. A coiled-coil region spans residues 54–129; sequence LEEKVKSCRC…AKKTQKEEHS (76 aa). Over residues 130 to 142 the composition is skewed to polar residues; sequence SQAGPAQAQGSPF. The DH domain maps to 265 to 440; that stretch reads KRQTVALELL…RVFISHYTLL (176 aa). Disordered stretches follow at residues 498–541, 668–687, and 702–745; these read LQPY…DWEL, RPEH…AGSS, and AKPL…RAAQ. The residue at position 757 (Arg-757) is an Omega-N-methylarginine. Residues 787 to 800 show a composition bias toward basic and acidic residues; that stretch reads DTTRFCPKEERESE. The disordered stretch occupies residues 787–844; the sequence is DTTRFCPKEERESEQTSFSDQNPRQDQKGGFRSSFRKLFKKKNGNATGEDFCGPWGWW. Residues 820 to 829 show a composition bias toward basic residues; that stretch reads SFRKLFKKKN.

May act as a guanine-nucleotide releasing factor. The sequence is that of Rho guanine nucleotide exchange factor 33 (ARHGEF33) from Homo sapiens (Human).